A 301-amino-acid polypeptide reads, in one-letter code: Glycine--tRNA ligase alpha subunit (301 aa).

It belongs to the class-II aminoacyl-tRNA synthetase family. Tetramer of two alpha and two beta subunits.

Its subcellular location is the cytoplasm. The catalysed reaction is tRNA(Gly) + glycine + ATP = glycyl-tRNA(Gly) + AMP + diphosphate. The chain is Glycine--tRNA ligase alpha subunit from Shewanella piezotolerans (strain WP3 / JCM 13877).